Here is a 351-residue protein sequence, read N- to C-terminus: Putative F-box protein At5g52610 (351 aa).

One can recognise an F-box domain in the interval 1 to 41; sequence MISEDLLVEILLRLPVKPLARCLCVCKLWATIIRSRYFINL.

The chain is Putative F-box protein At5g52610 from Arabidopsis thaliana (Mouse-ear cress).